Consider the following 91-residue polypeptide: Small ribosomal subunit protein uS15 (91 aa).

This sequence belongs to the universal ribosomal protein uS15 family. As to quaternary structure, part of the 30S ribosomal subunit. Forms a bridge to the 50S subunit in the 70S ribosome, contacting the 23S rRNA.

In terms of biological role, one of the primary rRNA binding proteins, it binds directly to 16S rRNA where it helps nucleate assembly of the platform of the 30S subunit by binding and bridging several RNA helices of the 16S rRNA. Forms an intersubunit bridge (bridge B4) with the 23S rRNA of the 50S subunit in the ribosome. This is Small ribosomal subunit protein uS15 from Synechococcus sp. (strain JA-2-3B'a(2-13)) (Cyanobacteria bacterium Yellowstone B-Prime).